We begin with the raw amino-acid sequence, 477 residues long: Octopamine receptor (477 aa).

The Extracellular segment spans residues 1-55 (MGQAATHVDANYTLINYTEEVIEDDRDACAVADDPKYPSSFGITLAVPEWEAICT). Asn11 and Asn16 each carry an N-linked (GlcNAc...) asparagine glycan. Residues 56–78 (AIVLTLIIISTIVGNILVILSVF) traverse the membrane as a helical segment. The Cytoplasmic portion of the chain corresponds to 79 to 88 (TYKPLRIVQN). The helical transmembrane segment at 89–110 (FFIVSLAVADLTVAILVLPLNV) threads the bilayer. Residues 111–127 (AYSILGQWVFGIYVCKM) lie on the Extracellular side of the membrane. A helical transmembrane segment spans residues 128–148 (WLTCDIMCCTSSILNLCAIAL). The Cytoplasmic segment spans residues 149 to 168 (DRYWAITDPINYAQKRTLER). The chain crosses the membrane as a helical span at residues 169-191 (VLLMIGVVWVLSLIISSPPLLGW). At 192–216 (NDWPDVFEPDTPCRLTSQPGFVIFS) the chain is on the extracellular side. The helical transmembrane segment at 217–238 (SSGSFYIPLVIMTVVYFEIYLA) threads the bilayer. Residues 239–405 (TKKRLRDRAK…LTRERRAART (167 aa)) lie on the Cytoplasmic side of the membrane. Disordered regions lie at residues 256–317 (SSGQ…SKDD) and 334–358 (VTDM…THED). Basic and acidic residues-rich tracts occupy residues 263-272 (NNKDDHHDQD) and 279-295 (NHNE…DNEK). Residues 296 to 312 (KKRTRKLTPKKKPKRKY) show a composition bias toward basic residues. Residues 406–427 (LGIIMGVFVVCWLPFFVIYLVI) traverse the membrane as a helical segment. Topologically, residues 428–439 (PFCASCCLSNKF) are extracellular. A helical transmembrane segment spans residues 440–460 (INFITWLGYCNSALNPLIYTI). Over 461–477 (FNMDFRRAFKKLLCMKP) the chain is Cytoplasmic.

It belongs to the G-protein coupled receptor 1 family.

It is found in the cell membrane. Functionally, receptor for octopamine. Octopamine (OA) is a neurotransmitter, neurohormone, and neuromodulator in invertebrates. The activity of this receptor is mediated by G proteins which activate adenylyl cyclase. This Heliothis virescens (Tobacco budworm moth) protein is Octopamine receptor.